A 239-amino-acid chain; its full sequence is MADKKANDSFQMSIYEHLEELRQRSIESIVALLISMVVCSLNINILIELIKQPAIGIKFLQLSPGEYFFTSIKITLYLGIILSSPIIFYEIIIFIIPGLTKKERRLLIPILIASGCLFVAGLIFGYIYITPIAVRFFINYGKDMIEPIWSFKEYFDFIILSLFSTAISFQIPIFQILLGSLKIINSKMMLSVWRYVVVGSTIFSAIITPSTDPLIQLFLSVAVMFLYFSSILVLKLFKL.

Transmembrane regions (helical) follow at residues 30–50, 76–96, 107–127, 157–177, 188–208, and 214–234; these read VALL…IELI, LYLG…IFII, LIPI…FGYI, FIIL…FQIL, MMLS…AIIT, and LIQL…ILVL.

The protein belongs to the TatC family.

The protein resides in the plastid. It is found in the chloroplast membrane. This is an uncharacterized protein from Cyanidium caldarium (Red alga).